A 315-amino-acid chain; its full sequence is MQIKLANPRGFCAGVDRAIEIVNRALEVFGPPIYVRHEVVHNKFVVEDLRARGAIFVEELDQVPDDVIVIFSAHGVSQAVRTEAAGRGLKVFDATCPLVTKVHIEVARYSRDGRECILIGHAGHPEVEGTMGQYDASNGGAIYLVEDEKDVANLQVQNPERLAFVTQTTLSMDDTSRVIDALRSRFPAIGGPRKDDICYATQNRQDAVKQLADECDVVLVVGSPNSSNSNRLRELAERMATPAYLIDGAEDMQRSWFDGVERIGITAGASAPEVLVRGVIQQLHAWGATGADELAGREENITFSMPKELRVRSLL.

Cys12 is a [4Fe-4S] cluster binding site. (2E)-4-hydroxy-3-methylbut-2-enyl diphosphate contacts are provided by His41 and His74. Dimethylallyl diphosphate is bound by residues His41 and His74. Residues His41 and His74 each contribute to the isopentenyl diphosphate site. [4Fe-4S] cluster is bound at residue Cys96. His124 lines the (2E)-4-hydroxy-3-methylbut-2-enyl diphosphate pocket. His124 is a dimethylallyl diphosphate binding site. His124 is an isopentenyl diphosphate binding site. Glu126 serves as the catalytic Proton donor. Residue Thr168 coordinates (2E)-4-hydroxy-3-methylbut-2-enyl diphosphate. Cys198 serves as a coordination point for [4Fe-4S] cluster. (2E)-4-hydroxy-3-methylbut-2-enyl diphosphate contacts are provided by Ser226, Ser227, Asn228, and Ser270. 4 residues coordinate dimethylallyl diphosphate: Ser226, Ser227, Asn228, and Ser270. Isopentenyl diphosphate contacts are provided by Ser226, Ser227, Asn228, and Ser270.

This sequence belongs to the IspH family. [4Fe-4S] cluster is required as a cofactor.

It catalyses the reaction isopentenyl diphosphate + 2 oxidized [2Fe-2S]-[ferredoxin] + H2O = (2E)-4-hydroxy-3-methylbut-2-enyl diphosphate + 2 reduced [2Fe-2S]-[ferredoxin] + 2 H(+). The catalysed reaction is dimethylallyl diphosphate + 2 oxidized [2Fe-2S]-[ferredoxin] + H2O = (2E)-4-hydroxy-3-methylbut-2-enyl diphosphate + 2 reduced [2Fe-2S]-[ferredoxin] + 2 H(+). It functions in the pathway isoprenoid biosynthesis; dimethylallyl diphosphate biosynthesis; dimethylallyl diphosphate from (2E)-4-hydroxy-3-methylbutenyl diphosphate: step 1/1. Its pathway is isoprenoid biosynthesis; isopentenyl diphosphate biosynthesis via DXP pathway; isopentenyl diphosphate from 1-deoxy-D-xylulose 5-phosphate: step 6/6. Catalyzes the conversion of 1-hydroxy-2-methyl-2-(E)-butenyl 4-diphosphate (HMBPP) into a mixture of isopentenyl diphosphate (IPP) and dimethylallyl diphosphate (DMAPP). Acts in the terminal step of the DOXP/MEP pathway for isoprenoid precursor biosynthesis. The polypeptide is 4-hydroxy-3-methylbut-2-enyl diphosphate reductase (Pseudomonas fluorescens (strain SBW25)).